Consider the following 258-residue polypeptide: Large ribosomal subunit protein eL8z (258 aa).

The segment at M1 to V20 is disordered.

The protein belongs to the eukaryotic ribosomal protein eL8 family.

The polypeptide is Large ribosomal subunit protein eL8z (RPL7A-1) (Oryza sativa subsp. japonica (Rice)).